A 257-amino-acid chain; its full sequence is uncharacterized protein (257 aa).

A run of 6 helical transmembrane segments spans residues 23–43, 79–99, 131–151, 158–178, 199–219, and 221–241; these read VLTDPVSWGLIGSLVVLEGLL, FIFIGLGMLLIKFWWIKVLGA, TFGIFWATVISVELMDLAFSV, FAVSEKVWVLLIGGMLGILMM, AFVLIGIIALKMAGSAFHYEM, and HSVFFIIIIAAFAVTLIIHYI.

This sequence belongs to the TerC family.

The protein resides in the cell membrane. This is an uncharacterized protein from Bacillus subtilis (strain 168).